We begin with the raw amino-acid sequence, 33 residues long: Photosystem II reaction center protein Psb30 (33 aa).

The helical transmembrane segment at 5–25 (LIVQLTSLILISIAGPIIIAL) threads the bilayer.

Belongs to the Psb30/Ycf12 family. As to quaternary structure, PSII is composed of 1 copy each of membrane proteins PsbA, PsbB, PsbC, PsbD, PsbE, PsbF, PsbH, PsbI, PsbJ, PsbK, PsbL, PsbM, PsbT, PsbY, PsbZ, Psb30/Ycf12, peripheral proteins of the oxygen-evolving complex and a large number of cofactors. It forms dimeric complexes.

It localises to the plastid. It is found in the chloroplast thylakoid membrane. In terms of biological role, a core subunit of photosystem II (PSII), probably helps stabilize the reaction center. The sequence is that of Photosystem II reaction center protein Psb30 from Euglena myxocylindracea.